A 617-amino-acid chain; its full sequence is NADPH-dependent diflavin oxidoreductase 1 (617 aa).

The 145-residue stretch at 3–147 (PMILYASETG…AFLPWLQQTL (145 aa)) folds into the Flavodoxin-like domain. FMN contacts are provided by residues 9–14 (SETGNA), 56–59 (STHG), 94–103 (LGDSSYERFC), and Glu129. The region spanning 226–465 (DDWVWATLKK…HIASPTLFLP (240 aa)) is the FAD-binding FR-type domain. Residues 404–407 (RQFS) and 438–441 (GLCS) contribute to the FAD site. NADP(+)-binding positions include Thr479, 534 to 535 (SR), and 540 to 544 (RIYVQ). Trp617 is an FAD binding site.

This sequence belongs to the NADPH-dependent diflavin oxidoreductase NDOR1 family. In the N-terminal section; belongs to the flavodoxin family. It in the C-terminal section; belongs to the flavoprotein pyridine nucleotide cytochrome reductase family. Interacts with DRE2; as part of the cytosolic iron-sulfur (Fe-S) protein assembly (CIA) machinery. The cofactor is FAD. FMN serves as cofactor.

The protein resides in the cytoplasm. It is found in the mitochondrion. The catalysed reaction is 2 oxidized [2Fe-2S]-[protein] + NADPH = 2 reduced [2Fe-2S]-[protein] + NADP(+) + H(+). Functionally, NADPH-dependent reductase which is a central component of the cytosolic iron-sulfur (Fe-S) protein assembly (CIA) machinery. Transfers electrons from NADPH via its FAD and FMN prosthetic groups to the [2Fe-2S] cluster of DRE2, another key component of the CIA machinery. In turn, this reduced cluster provides electrons for assembly of cytosolic iron-sulfur cluster proteins. Positively controls H(2)O(2)-induced cell death. This Cryptococcus neoformans var. neoformans serotype D (strain B-3501A) (Filobasidiella neoformans) protein is NADPH-dependent diflavin oxidoreductase 1.